The sequence spans 133 residues: Meiotically up-regulated gene 15 protein (133 aa).

It is found in the cytoplasm. The protein localises to the nucleus. Has a role in meiosis. This is Meiotically up-regulated gene 15 protein (mug15) from Schizosaccharomyces pombe (strain 972 / ATCC 24843) (Fission yeast).